Reading from the N-terminus, the 270-residue chain is Probable septum site-determining protein MinC (270 aa).

Residues 105-129 (DRRAPSSKAADEAPVQQAEPAAPAA) form a disordered region. Low complexity predominate over residues 116-129 (EAPVQQAEPAAPAA).

This sequence belongs to the MinC family. In terms of assembly, interacts with MinD and FtsZ.

Functionally, cell division inhibitor that blocks the formation of polar Z ring septums. Rapidly oscillates between the poles of the cell to destabilize FtsZ filaments that have formed before they mature into polar Z rings. Prevents FtsZ polymerization. This chain is Probable septum site-determining protein MinC, found in Burkholderia pseudomallei (strain 1106a).